The chain runs to 121 residues: Large ribosomal subunit protein bL12 (121 aa).

Belongs to the bacterial ribosomal protein bL12 family. In terms of assembly, homodimer. Part of the ribosomal stalk of the 50S ribosomal subunit. Forms a multimeric L10(L12)X complex, where L10 forms an elongated spine to which 2 to 4 L12 dimers bind in a sequential fashion. Binds GTP-bound translation factors.

Its function is as follows. Forms part of the ribosomal stalk which helps the ribosome interact with GTP-bound translation factors. Is thus essential for accurate translation. This is Large ribosomal subunit protein bL12 from Tolumonas auensis (strain DSM 9187 / NBRC 110442 / TA 4).